The primary structure comprises 557 residues: Urocanate hydratase (557 aa).

Residues methionine 1 to asparagine 20 form a disordered region. NAD(+) contacts are provided by residues glycine 52–glycine 53, glutamine 130, glycine 176–glycine 178, glutamate 196, arginine 201, asparagine 242–alanine 243, glutamine 263–histidine 267, tyrosine 273–leucine 274, and tyrosine 322. Cysteine 410 is an active-site residue. Residue glycine 492 coordinates NAD(+).

Belongs to the urocanase family. NAD(+) is required as a cofactor.

It localises to the cytoplasm. The enzyme catalyses 4-imidazolone-5-propanoate = trans-urocanate + H2O. Its pathway is amino-acid degradation; L-histidine degradation into L-glutamate; N-formimidoyl-L-glutamate from L-histidine: step 2/3. Catalyzes the conversion of urocanate to 4-imidazolone-5-propionate. In Brucella suis (strain ATCC 23445 / NCTC 10510), this protein is Urocanate hydratase.